We begin with the raw amino-acid sequence, 488 residues long: GTPase Der (488 aa).

One can recognise an EngA-type G 1 domain in the interval proline 3–leucine 166. Residues glycine 9–serine 16, aspartate 56–isoleucine 60, and asparagine 118–aspartate 121 contribute to the GTP site. The disordered stretch occupies residues leucine 168–glutamate 191. Over residues glycine 172–glutamate 189 the composition is skewed to acidic residues. The 174-residue stretch at isoleucine 200 to threonine 373 folds into the EngA-type G 2 domain. GTP-binding positions include glycine 206–serine 213, aspartate 253–valine 257, and asparagine 318–aspartate 321. The KH-like domain maps to arginine 374–alanine 458.

It belongs to the TRAFAC class TrmE-Era-EngA-EngB-Septin-like GTPase superfamily. EngA (Der) GTPase family. Associates with the 50S ribosomal subunit.

In terms of biological role, GTPase that plays an essential role in the late steps of ribosome biogenesis. The chain is GTPase Der from Shewanella sediminis (strain HAW-EB3).